The sequence spans 296 residues: Arginine/serine-rich protein 1 (296 aa).

The interval 1 to 131 (MSNYVNDMWP…RSRSRSRERS (131 aa)) is disordered. Ser-12 carries the post-translational modification Phosphoserine. Residues 20-31 (SASRSGGSSRLS) show a composition bias toward low complexity. Positions 32–125 (SRSRSRSFSR…RSRSRSRSRS (94 aa)) are enriched in basic residues. Phosphoserine is present on residues Ser-111 and Ser-113. Arg-141 bears the Omega-N-methylarginine mark. A compositionally biased stretch (basic and acidic residues) spans 156 to 165 (ERSRWRDRSR). Disordered regions lie at residues 156 to 175 (ERSR…TPFR) and 217 to 296 (SHGI…WIPV). Over residues 245-261 (EKPSQQRSIAFSSNNSV) the composition is skewed to polar residues. The segment covering 272–287 (ATEETSSRSPKIDKKK) has biased composition (basic and acidic residues). At Ser-280 the chain carries Phosphoserine.

This sequence belongs to the RSRP family. In terms of processing, phosphorylated. Phosphorylation at Ser-111 and Ser-113 mediates the interaction with spliceosome proteins.

It localises to the nucleus. In terms of biological role, probably acts as a spliceosomal factor that contributes to spliceosome assembly and regulates the isoform switching of proteins such as PARP6. The sequence is that of Arginine/serine-rich protein 1 (RSRP1) from Macaca fascicularis (Crab-eating macaque).